Consider the following 151-residue polypeptide: Ubiquitin-conjugating enzyme E2 2 (151 aa).

The disordered stretch occupies residues 1 to 26 (MSTSARRRLMRDFKRMQTDPPAGVSA). Positions 4 to 150 (SARRRLMRDF…VRETVEKSWE (147 aa)) constitute a UBC core domain. Cys88 serves as the catalytic Glycyl thioester intermediate.

It belongs to the ubiquitin-conjugating enzyme family.

Its subcellular location is the cytoplasm. It is found in the nucleus. The catalysed reaction is S-ubiquitinyl-[E1 ubiquitin-activating enzyme]-L-cysteine + [E2 ubiquitin-conjugating enzyme]-L-cysteine = [E1 ubiquitin-activating enzyme]-L-cysteine + S-ubiquitinyl-[E2 ubiquitin-conjugating enzyme]-L-cysteine.. Its pathway is protein modification; protein ubiquitination. Catalyzes the covalent attachment of ubiquitin to other proteins. Plays a role in transcription regulation by catalyzing the monoubiquitination of histone H2B to form H2BK123ub1. H2BK123ub1 gives a specific tag for epigenetic transcriptional activation and is also a prerequisite for H3K4me and H3K79me formation. Also involved in postreplication repair of UV-damaged DNA, in N-end rule-dependent protein degradation and in sporulation. The sequence is that of Ubiquitin-conjugating enzyme E2 2 (ubc2) from Aspergillus fumigatus (strain ATCC MYA-4609 / CBS 101355 / FGSC A1100 / Af293) (Neosartorya fumigata).